Reading from the N-terminus, the 281-residue chain is 3-deoxy-manno-octulosonate cytidylyltransferase (281 aa).

This sequence belongs to the KdsB family.

It is found in the cytoplasm. It catalyses the reaction 3-deoxy-alpha-D-manno-oct-2-ulosonate + CTP = CMP-3-deoxy-beta-D-manno-octulosonate + diphosphate. Its pathway is nucleotide-sugar biosynthesis; CMP-3-deoxy-D-manno-octulosonate biosynthesis; CMP-3-deoxy-D-manno-octulosonate from 3-deoxy-D-manno-octulosonate and CTP: step 1/1. It functions in the pathway bacterial outer membrane biogenesis; lipopolysaccharide biosynthesis. Its function is as follows. Activates KDO (a required 8-carbon sugar) for incorporation into bacterial lipopolysaccharide in Gram-negative bacteria. The sequence is that of 3-deoxy-manno-octulosonate cytidylyltransferase from Xanthomonas campestris pv. campestris (strain B100).